We begin with the raw amino-acid sequence, 651 residues long: MBT domain-containing protein 1 (651 aa).

Positions Ser21–Leu55 are disordered. Low complexity predominate over residues Asp29–Ser41. An FCS-type zinc finger spans residues Pro68–Arg103. Zn(2+) is bound by residues Cys77, Cys80, Cys97, and Cys101. MBT repeat units lie at residues Phe164–Pro268, Thr276–Arg373, Phe374–Pro479, and Phe487–Pro583. 2 disordered regions span residues Gln581–His610 and Thr629–Pro651. The segment covering Gln586 to Ser596 has biased composition (low complexity). Positions Lys597–His610 are enriched in basic residues. Polar residues predominate over residues Gln632–Gly643.

As to quaternary structure, monomer. Component of the NuA4 histone acetyltransferase complex.

It localises to the nucleus. It is found in the chromosome. In terms of biological role, chromatin reader component of the NuA4 histone acetyltransferase complex, a multiprotein complex involved in transcriptional activation of select genes principally by acetylation of nucleosomal histones H4 and H2A. The NuA4 complex plays a direct role in repair of DNA double-strand breaks (DSBs) by promoting homologous recombination (HR). MBTD1 specifically recognizes and binds monomethylated and dimethylated 'Lys-20' on histone H4 (H4K20me1 and H4K20me2, respectively). In the NuA4 complex, MBTD1 promotes recruitment of the complex to H4K20me marks by competing with TP53BP1 for binding to H4K20me. Following recruitment to H4K20me at DNA breaks, the NuA4 complex catalyzes acetylation of 'Lys-15' on histone H2A (H2AK15), blocking the ubiquitination mark required for TP53BP1 localization at DNA breaks, thereby promoting homologous recombination (HR). The chain is MBT domain-containing protein 1 from Xenopus tropicalis (Western clawed frog).